The sequence spans 471 residues: 3-isopropylmalate dehydratase large subunit (471 aa).

Positions 349, 409, and 412 each coordinate [4Fe-4S] cluster.

Belongs to the aconitase/IPM isomerase family. LeuC type 1 subfamily. In terms of assembly, heterodimer of LeuC and LeuD. [4Fe-4S] cluster serves as cofactor.

It carries out the reaction (2R,3S)-3-isopropylmalate = (2S)-2-isopropylmalate. It functions in the pathway amino-acid biosynthesis; L-leucine biosynthesis; L-leucine from 3-methyl-2-oxobutanoate: step 2/4. Its function is as follows. Catalyzes the isomerization between 2-isopropylmalate and 3-isopropylmalate, via the formation of 2-isopropylmaleate. This Aliivibrio fischeri (strain MJ11) (Vibrio fischeri) protein is 3-isopropylmalate dehydratase large subunit.